A 396-amino-acid chain; its full sequence is ATP synthase subunit beta, chloroplastic (396 aa).

74-81 is an ATP binding site; the sequence is GGAGVGKT.

The protein belongs to the ATPase alpha/beta chains family. In terms of assembly, F-type ATPases have 2 components, CF(1) - the catalytic core - and CF(0) - the membrane proton channel. CF(1) has five subunits: alpha(3), beta(3), gamma(1), delta(1), epsilon(1). CF(0) has four main subunits: a(1), b(1), b'(1) and c(9-12).

It is found in the plastid. The protein localises to the chloroplast thylakoid membrane. The enzyme catalyses ATP + H2O + 4 H(+)(in) = ADP + phosphate + 5 H(+)(out). Its function is as follows. Produces ATP from ADP in the presence of a proton gradient across the membrane. The catalytic sites are hosted primarily by the beta subunits. The polypeptide is ATP synthase subunit beta, chloroplastic (Adiantum raddianum (Maidenhair fern)).